We begin with the raw amino-acid sequence, 303 residues long: Elongation factor Ts (303 aa).

Positions threonine 82–valine 85 are involved in Mg(2+) ion dislocation from EF-Tu.

Belongs to the EF-Ts family.

It is found in the cytoplasm. Functionally, associates with the EF-Tu.GDP complex and induces the exchange of GDP to GTP. It remains bound to the aminoacyl-tRNA.EF-Tu.GTP complex up to the GTP hydrolysis stage on the ribosome. The protein is Elongation factor Ts of Clostridioides difficile (strain 630) (Peptoclostridium difficile).